Reading from the N-terminus, the 563-residue chain is Arginine--tRNA ligase (563 aa).

Positions 121-131 (PNIAKPMSMGH) match the 'HIGH' region motif.

It belongs to the class-I aminoacyl-tRNA synthetase family. As to quaternary structure, monomer.

Its subcellular location is the cytoplasm. It carries out the reaction tRNA(Arg) + L-arginine + ATP = L-arginyl-tRNA(Arg) + AMP + diphosphate. The sequence is that of Arginine--tRNA ligase from Leuconostoc mesenteroides subsp. mesenteroides (strain ATCC 8293 / DSM 20343 / BCRC 11652 / CCM 1803 / JCM 6124 / NCDO 523 / NBRC 100496 / NCIMB 8023 / NCTC 12954 / NRRL B-1118 / 37Y).